The primary structure comprises 171 residues: Large ribosomal subunit protein bL9 (171 aa).

The protein belongs to the bacterial ribosomal protein bL9 family.

Functionally, binds to the 23S rRNA. This Rickettsia africae (strain ESF-5) protein is Large ribosomal subunit protein bL9.